An 803-amino-acid polypeptide reads, in one-letter code: Leucine--tRNA ligase (803 aa).

Residues 40–51 (PYPSGAGLHVGH) carry the 'HIGH' region motif. The 'KMSKS' region signature appears at 575-579 (KMSKS). Residue K578 coordinates ATP.

Belongs to the class-I aminoacyl-tRNA synthetase family.

Its subcellular location is the cytoplasm. It carries out the reaction tRNA(Leu) + L-leucine + ATP = L-leucyl-tRNA(Leu) + AMP + diphosphate. The polypeptide is Leucine--tRNA ligase (Listeria monocytogenes serotype 4b (strain F2365)).